The following is a 226-amino-acid chain: Uridylate kinase (226 aa).

9 to 13 (KVSGK) is a binding site for ATP. Residue G46 participates in UMP binding. 2 residues coordinate ATP: G47 and R51. UMP-binding positions include D68 and 116–122 (FQPGQST). Residues T142, Y148, and D151 each coordinate ATP.

This sequence belongs to the UMP kinase family. Homohexamer.

It localises to the cytoplasm. It carries out the reaction UMP + ATP = UDP + ADP. It participates in pyrimidine metabolism; CTP biosynthesis via de novo pathway; UDP from UMP (UMPK route): step 1/1. With respect to regulation, inhibited by UTP. Functionally, catalyzes the reversible phosphorylation of UMP to UDP. In Hyperthermus butylicus (strain DSM 5456 / JCM 9403 / PLM1-5), this protein is Uridylate kinase.